A 188-amino-acid chain; its full sequence is Elongation factor P (188 aa).

Position 34 is an N6-(3,6-diaminohexanoyl)-5-hydroxylysine (K34).

The protein belongs to the elongation factor P family. In terms of processing, may be beta-lysylated on the epsilon-amino group of Lys-34 by the combined action of EpmA and EpmB, and then hydroxylated on the C5 position of the same residue by EpmC (if this protein is present). Lysylation is critical for the stimulatory effect of EF-P on peptide-bond formation. The lysylation moiety may extend toward the peptidyltransferase center and stabilize the terminal 3-CCA end of the tRNA. Hydroxylation of the C5 position on Lys-34 may allow additional potential stabilizing hydrogen-bond interactions with the P-tRNA.

The protein localises to the cytoplasm. Its pathway is protein biosynthesis; polypeptide chain elongation. Involved in peptide bond synthesis. Alleviates ribosome stalling that occurs when 3 or more consecutive Pro residues or the sequence PPG is present in a protein, possibly by augmenting the peptidyl transferase activity of the ribosome. Modification of Lys-34 is required for alleviation. The polypeptide is Elongation factor P (Vibrio cholerae serotype O1 (strain ATCC 39541 / Classical Ogawa 395 / O395)).